The following is a 167-amino-acid chain: MGQAKKVSSALSKLFVYGALKYGQPSNSILASSGNGFAKFWCKATTTQKLPLVIATRYNIPFLLNKPGVGYYVTGEIYEVDDRMLNSLDNLEDCEEIYTREMHDMNIGVGEGTVPCWVYLLQKYPENLLSLRYLSSYENSTTHPYIMRHRRTHKHPAQDDLTYEAQN.

Residue 17 to 20 participates in substrate binding; sequence YGAL. Glu-92 acts as the Proton acceptor in catalysis.

This sequence belongs to the gamma-glutamylcyclotransferase family. As to expression, in embryos, expression is seen in heart cells of the dorsal vessel and hindgut visceral mesoderm.

Putative gamma-glutamylcyclotransferase. The protein is Troponin C-akin-1 protein (Tina-1) of Drosophila melanogaster (Fruit fly).